Here is a 378-residue protein sequence, read N- to C-terminus: UDP-N-acetylglucosamine 2-epimerase (378 aa).

The active site involves H214.

This sequence belongs to the UDP-N-acetylglucosamine 2-epimerase family.

The catalysed reaction is UDP-N-acetyl-alpha-D-glucosamine = UDP-N-acetyl-alpha-D-mannosamine. The protein operates within bacterial outer membrane biogenesis; LPS O-antigen biosynthesis. The polypeptide is UDP-N-acetylglucosamine 2-epimerase (rfbC) (Salmonella borreze).